The following is a 144-amino-acid chain: Large ribosomal subunit protein uL22 (144 aa).

The segment at 1-38 (MAETQTTKKGAKRVRQPVPARRSKPNRPAKAAPGPHAS) is disordered. Residues 9–27 (KGAKRVRQPVPARRSKPNR) show a composition bias toward basic residues.

Belongs to the universal ribosomal protein uL22 family. In terms of assembly, part of the 50S ribosomal subunit.

This protein binds specifically to 23S rRNA; its binding is stimulated by other ribosomal proteins, e.g. L4, L17, and L20. It is important during the early stages of 50S assembly. It makes multiple contacts with different domains of the 23S rRNA in the assembled 50S subunit and ribosome. Functionally, the globular domain of the protein is located near the polypeptide exit tunnel on the outside of the subunit, while an extended beta-hairpin is found that lines the wall of the exit tunnel in the center of the 70S ribosome. This Anaeromyxobacter sp. (strain Fw109-5) protein is Large ribosomal subunit protein uL22.